A 347-amino-acid chain; its full sequence is NADH-quinone oxidoreductase subunit H (347 aa).

A run of 8 helical transmembrane segments spans residues 25–45 (ILFMVVQSLVIFLVVVIVAAM), 95–115 (FMFTLAPAVAMFTALASFAII), 128–148 (IGILFFFAMAGIAVYAVLFGG), 168–188 (ISYEVFLGLSLMGVVALTGSF), 200–220 (GWYIIPQFFGFLTFVVAGVAV), 251–271 (FFIGEYVNVVLISALMTCLFF), 284–304 (FIPPAFWFMIKTLFFMTMFIL), and 324–344 (VCLPVTLINLLVTAAVILIFS).

It belongs to the complex I subunit 1 family. As to quaternary structure, NDH-1 is composed of 14 different subunits. Subunits NuoA, H, J, K, L, M, N constitute the membrane sector of the complex.

Its subcellular location is the cell inner membrane. The catalysed reaction is a quinone + NADH + 5 H(+)(in) = a quinol + NAD(+) + 4 H(+)(out). In terms of biological role, NDH-1 shuttles electrons from NADH, via FMN and iron-sulfur (Fe-S) centers, to quinones in the respiratory chain. The immediate electron acceptor for the enzyme in this species is believed to be ubiquinone. Couples the redox reaction to proton translocation (for every two electrons transferred, four hydrogen ions are translocated across the cytoplasmic membrane), and thus conserves the redox energy in a proton gradient. This subunit may bind ubiquinone. The protein is NADH-quinone oxidoreductase subunit H of Psychrobacter arcticus (strain DSM 17307 / VKM B-2377 / 273-4).